Here is a 382-residue protein sequence, read N- to C-terminus: D-galactonate dehydratase 1 (382 aa).

Residue Asp-183 coordinates Mg(2+). His-185 (proton donor) is an active-site residue. Glu-209 and Glu-235 together coordinate Mg(2+). The Proton acceptor role is filled by His-285.

Belongs to the mandelate racemase/muconate lactonizing enzyme family. GalD subfamily. It depends on Mg(2+) as a cofactor.

It catalyses the reaction D-galactonate = 2-dehydro-3-deoxy-D-galactonate + H2O. The protein operates within carbohydrate acid metabolism; D-galactonate degradation; D-glyceraldehyde 3-phosphate and pyruvate from D-galactonate: step 1/3. Catalyzes the dehydration of D-galactonate to 2-keto-3-deoxy-D-galactonate. This is D-galactonate dehydratase 1 from Escherichia coli (strain SMS-3-5 / SECEC).